A 524-amino-acid chain; its full sequence is Probable pectinesterase/pectinesterase inhibitor 42 (524 aa).

The signal sequence occupies residues 1–22 (MLVKVFSFFILMITMVVIGVSK). The interval 23 to 172 (EYCDDKHSCQ…ISKAKVALAL (150 aa)) is pectinesterase inhibitor 42. The tract at residues 215 to 510 (DVVVAKDGTG…FTVAKLLDGE (296 aa)) is pectinesterase 42. 2 N-linked (GlcNAc...) asparagine glycosylation sites follow: Asn-265 and Asn-281. Thr-290 is a substrate binding site. Asp-343 serves as the catalytic Proton donor; for pectinesterase activity. Cys-357 and Cys-377 are joined by a disulfide. Asp-364 serves as the catalytic Nucleophile; for pectinesterase activity. Asn-412 carries N-linked (GlcNAc...) asparagine glycosylation. Substrate-binding residues include Arg-430 and Trp-432.

This sequence in the N-terminal section; belongs to the PMEI family. In the C-terminal section; belongs to the pectinesterase family. In terms of tissue distribution, expressed in siliques but not in flower buds.

Its subcellular location is the secreted. The protein localises to the cell wall. The catalysed reaction is [(1-&gt;4)-alpha-D-galacturonosyl methyl ester](n) + n H2O = [(1-&gt;4)-alpha-D-galacturonosyl](n) + n methanol + n H(+). It functions in the pathway glycan metabolism; pectin degradation; 2-dehydro-3-deoxy-D-gluconate from pectin: step 1/5. Acts in the modification of cell walls via demethylesterification of cell wall pectin. This Arabidopsis thaliana (Mouse-ear cress) protein is Probable pectinesterase/pectinesterase inhibitor 42 (PME42).